Reading from the N-terminus, the 128-residue chain is MGFQKFSPFLALSILVLLQAGSLHAAPFRSALESSPADPATLSEDEARLLLAALVQDYVQMKASELEQEQEREGSRIIAQKRACDTATCVTHRLAGLLSRSGGVVKNNFVPTNVGSKAFGRRRRDLQA.

Positions 1-25 (MGFQKFSPFLALSILVLLQAGSLHA) are cleaved as a signal peptide. Positions 26–80 (APFRSALESSPADPATLSEDEARLLLAALVQDYVQMKASELEQEQEREGSRIIAQ) are excised as a propeptide. Cysteines 84 and 89 form a disulfide. Position 119 is a phenylalanine amide (F119). Positions 125–128 (DLQA) are excised as a propeptide.

Belongs to the calcitonin family. Expressed in spinal cord.

It localises to the secreted. Functionally, CGRP1/CALCA is a peptide hormone that induces vasodilation mediated by the CALCRL-RAMP1 receptor complex. Dilates a variety of vessels including the coronary, cerebral and systemic vasculature. Its abundance in the CNS also points toward a neurotransmitter or neuromodulator role. It also elevates platelet cAMP. CGRP1 can also bind and activate CALCR-RAMP1 (AMYR1) receptor complex. The polypeptide is Calcitonin gene-related peptide 1 (Homo sapiens (Human)).